We begin with the raw amino-acid sequence, 221 residues long: MANEEVILLDFWPSMFGMRLRIALAEKEIKYEYKEEDLRNKSPLLLQMNPIHKKIPVLIHNGKPICESIIAVEYIEEVWKDKAPNLLPSDPYDRAQARFWADYIDKKLYDFGRKLWTTKGEEQEAAKKDFIECLKVLEGALGDKPYFGGESFGFVDIALIGYYSWFYAYETFGNFSTEAECPKFVAWAKRCMQRESVAKSLPDQPKVLEFVKVLRQKFGLE.

One can recognise a GST N-terminal domain in the interval 4–83 (EEVILLDFWP…YIEEVWKDKA (80 aa)). Glutathione-binding positions include serine 14, lysine 41, isoleucine 55, and 67 to 68 (ES). A GST C-terminal domain is found at 90–214 (DPYDRAQARF…PKVLEFVKVL (125 aa)).

This sequence belongs to the GST superfamily. HSP26 family. Root tip-specific expression.

The enzyme catalyses RX + glutathione = an S-substituted glutathione + a halide anion + H(+). The chain is Probable glutathione S-transferase from Nicotiana tabacum (Common tobacco).